The chain runs to 61 residues: Sperm protamine P1 (61 aa).

Residues 1–61 (MARYRHSRSR…RRYHSHRRRY (61 aa)) are disordered.

It belongs to the protamine P1 family. In terms of tissue distribution, testis.

It localises to the nucleus. It is found in the chromosome. In terms of biological role, protamines substitute for histones in the chromatin of sperm during the haploid phase of spermatogenesis. They compact sperm DNA into a highly condensed, stable and inactive complex. The chain is Sperm protamine P1 (PRM1) from Notoryctes typhlops (Southern marsupial mole).